We begin with the raw amino-acid sequence, 173 residues long: NADH-ubiquinone oxidoreductase chain 6 (173 aa).

The next 5 membrane-spanning stretches (helical) occupy residues Met-1–Ser-21, Tyr-27–Gly-47, Val-48–Val-68, Val-87–Leu-107, and Cys-139–Leu-159.

The protein belongs to the complex I subunit 6 family.

Its subcellular location is the mitochondrion membrane. The catalysed reaction is a ubiquinone + NADH + 5 H(+)(in) = a ubiquinol + NAD(+) + 4 H(+)(out). In terms of biological role, core subunit of the mitochondrial membrane respiratory chain NADH dehydrogenase (Complex I) that is believed to belong to the minimal assembly required for catalysis. Complex I functions in the transfer of electrons from NADH to the respiratory chain. The immediate electron acceptor for the enzyme is believed to be ubiquinone. This is NADH-ubiquinone oxidoreductase chain 6 (MT-ND6) from Synthliboramphus wumizusume (Japanese murrelet).